Reading from the N-terminus, the 245-residue chain is Ribonuclease PH (245 aa).

Phosphate is bound by residues arginine 86 and 124–126; that span reads GTR.

This sequence belongs to the RNase PH family. Homohexameric ring arranged as a trimer of dimers.

The enzyme catalyses tRNA(n+1) + phosphate = tRNA(n) + a ribonucleoside 5'-diphosphate. Phosphorolytic 3'-5' exoribonuclease that plays an important role in tRNA 3'-end maturation. Removes nucleotide residues following the 3'-CCA terminus of tRNAs; can also add nucleotides to the ends of RNA molecules by using nucleoside diphosphates as substrates, but this may not be physiologically important. Probably plays a role in initiation of 16S rRNA degradation (leading to ribosome degradation) during starvation. The protein is Ribonuclease PH of Bacillus anthracis (strain A0248).